The chain runs to 512 residues: 2'-5'-oligoadenylate synthase-like protein 1 (512 aa).

Ubiquitin-like domains follow at residues 351–430 (IQVT…ISPE) and 431–507 (IQVF…EGKA).

This sequence belongs to the 2-5A synthase family. As to quaternary structure, specifically interacts with the ligand binding domain of the thyroid receptor (TR). TRIP14 does not require the presence of thyroid hormone for its interaction. Binds MBD1.

The protein localises to the nucleus. It is found in the nucleolus. It localises to the cytoplasm. Functionally, does not have 2'-5'-OAS activity, but can bind double-stranded RNA. Displays antiviral activity via an alternative antiviral pathway independent of RNase L. The chain is 2'-5'-oligoadenylate synthase-like protein 1 (Oasl) from Rattus norvegicus (Rat).